A 138-amino-acid polypeptide reads, in one-letter code: Small ribosomal subunit protein uS11c (138 aa).

The segment at 1–23 (MKKPIPRIGSRRNGRIGSRKNGR) is disordered.

The protein belongs to the universal ribosomal protein uS11 family. In terms of assembly, part of the 30S ribosomal subunit.

The protein resides in the plastid. Its subcellular location is the chloroplast. The polypeptide is Small ribosomal subunit protein uS11c (Amborella trichopoda).